The following is a 56-amino-acid chain: Large ribosomal subunit protein bL32 (56 aa).

A compositionally biased stretch (basic residues) spans 1–16 (MAVQKNRKTRSKRGMR). Residues 1–37 (MAVQKNRKTRSKRGMRRSHDALGTATMSVDSTSGETH) form a disordered region. Positions 25 to 35 (ATMSVDSTSGE) are enriched in polar residues.

It belongs to the bacterial ribosomal protein bL32 family.

In Pseudoalteromonas atlantica (strain T6c / ATCC BAA-1087), this protein is Large ribosomal subunit protein bL32.